The sequence spans 623 residues: Protein FAM234B (623 aa).

Residues 1 to 82 (MATVLSRALK…TSERAPEGYP (82 aa)) are disordered. Residues 104-124 (AVFLLTVVISMILVLVCAFLI) traverse the membrane as a helical segment.

It belongs to the FAM234 family.

Its subcellular location is the membrane. The protein resides in the golgi outpost. It localises to the cytoplasm. The protein localises to the cytoskeleton. It is found in the microtubule organizing center. The chain is Protein FAM234B (FAM234B) from Gallus gallus (Chicken).